Here is a 254-residue protein sequence, read N- to C-terminus: NAD-dependent glycerol dehydrogenase (254 aa).

V18–K47 is a binding site for NAD(+). The active-site Proton acceptor is the Y160. K164 serves as a coordination point for NAD(+).

The protein belongs to the short-chain dehydrogenases/reductases (SDR) family. Mg(2+) is required as a cofactor. Mn(2+) serves as cofactor.

The protein localises to the cytoplasm. It catalyses the reaction glycerol + NAD(+) = dihydroxyacetone + NADH + H(+). Inhibited by Zn(2+). Functionally, involved in the glycerol metabolism. Catalyzes the NAD-dependent oxidation of glycerol to dihydroxyacetone (glycerone). GolD specifically uses NAD. The sequence is that of NAD-dependent glycerol dehydrogenase from Listeria innocua serovar 6a (strain ATCC BAA-680 / CLIP 11262).